A 326-amino-acid chain; its full sequence is Protein phosphatase PTC7 homolog fig (326 aa).

Residues 40–83 (VQGKSKPRSPHLTSPQCSPEHRPRRFRPPSASGRTAFSSAPRPK) are disordered. One can recognise a PPM-type phosphatase domain in the interval 64 to 314 (RFRPPSASGR…DDITVVLASV (251 aa)). Mn(2+) is bound by residues aspartate 91, glycine 92, and aspartate 236.

The protein belongs to the PP2C family. Requires Mg(2+) as cofactor. It depends on Mn(2+) as a cofactor.

The enzyme catalyses O-phospho-L-seryl-[protein] + H2O = L-seryl-[protein] + phosphate. It carries out the reaction O-phospho-L-threonyl-[protein] + H2O = L-threonyl-[protein] + phosphate. The polypeptide is Protein phosphatase PTC7 homolog fig (Drosophila persimilis (Fruit fly)).